An 88-amino-acid polypeptide reads, in one-letter code: Small ribosomal subunit protein bS18A (88 aa).

Belongs to the bacterial ribosomal protein bS18 family. Part of the 30S ribosomal subunit. Forms a tight heterodimer with protein bS6.

In terms of biological role, binds as a heterodimer with protein bS6 to the central domain of the 16S rRNA, where it helps stabilize the platform of the 30S subunit. In Roseiflexus sp. (strain RS-1), this protein is Small ribosomal subunit protein bS18A.